The primary structure comprises 197 residues: Imidazoleglycerol-phosphate dehydratase (197 aa).

Belongs to the imidazoleglycerol-phosphate dehydratase family.

The protein resides in the cytoplasm. The catalysed reaction is D-erythro-1-(imidazol-4-yl)glycerol 3-phosphate = 3-(imidazol-4-yl)-2-oxopropyl phosphate + H2O. Its pathway is amino-acid biosynthesis; L-histidine biosynthesis; L-histidine from 5-phospho-alpha-D-ribose 1-diphosphate: step 6/9. The protein is Imidazoleglycerol-phosphate dehydratase of Novosphingobium aromaticivorans (strain ATCC 700278 / DSM 12444 / CCUG 56034 / CIP 105152 / NBRC 16084 / F199).